We begin with the raw amino-acid sequence, 299 residues long: ATP phosphoribosyltransferase (299 aa).

It belongs to the ATP phosphoribosyltransferase family. Long subfamily. In terms of assembly, equilibrium between an active dimeric form, an inactive hexameric form and higher aggregates. Interconversion between the various forms is largely reversible and is influenced by the natural substrates and inhibitors of the enzyme. It depends on Mg(2+) as a cofactor.

It localises to the cytoplasm. The enzyme catalyses 1-(5-phospho-beta-D-ribosyl)-ATP + diphosphate = 5-phospho-alpha-D-ribose 1-diphosphate + ATP. Its pathway is amino-acid biosynthesis; L-histidine biosynthesis; L-histidine from 5-phospho-alpha-D-ribose 1-diphosphate: step 1/9. With respect to regulation, feedback inhibited by histidine. Functionally, catalyzes the condensation of ATP and 5-phosphoribose 1-diphosphate to form N'-(5'-phosphoribosyl)-ATP (PR-ATP). Has a crucial role in the pathway because the rate of histidine biosynthesis seems to be controlled primarily by regulation of HisG enzymatic activity. The sequence is that of ATP phosphoribosyltransferase from Salmonella choleraesuis (strain SC-B67).